Consider the following 505-residue polypeptide: MNLRPEEISSIIKEQIKRYENKLEVKDVGTVIQVGDGIARIHGLEKCMAGELLEFPNAVYGMAQNLEEDNVGCVLLGSDATIREGDIVKRTGRIVEVPVGEALLGRVVNALGQPIDGKGPINTDAYREVERVAPGIISRKSVHEPLQTGIKAIDSMIPIGRGQRELIIGDRQTGKTALAIDTIINQKNTDVICIYVAIGQKKSTVAQIKDSLEKAGAMEYTIIVSSTADELAPLQYLAPYAGCAMGEEFMEKGKHVLIIYDDLSKHAVAYRAMSLLLRRPPGREAYPGDVFYLHSRLLERAAKLSDERGGGSLTALPIIETQAGDVSAYIPTNVISITDGQIFLETELFNAGIRPAVNPGISVSRVGGNAQIKAMKKVAGTLRLELAQYRELAAFAQFGSDLDKETQERLSQGERILEILKQPQYDPMPVEKQIMMIYATTKKYLTDIAVEDIRDFESGFLRFMDNEHPEVGKDIVATGSISEETEAKLKEAIESFKKQFKAERE.

169–176 is a binding site for ATP; the sequence is GDRQTGKT.

It belongs to the ATPase alpha/beta chains family. F-type ATPases have 2 components, CF(1) - the catalytic core - and CF(0) - the membrane proton channel. CF(1) has five subunits: alpha(3), beta(3), gamma(1), delta(1), epsilon(1). CF(0) has three main subunits: a(1), b(2) and c(9-12). The alpha and beta chains form an alternating ring which encloses part of the gamma chain. CF(1) is attached to CF(0) by a central stalk formed by the gamma and epsilon chains, while a peripheral stalk is formed by the delta and b chains.

Its subcellular location is the cell membrane. It catalyses the reaction ATP + H2O + 4 H(+)(in) = ADP + phosphate + 5 H(+)(out). In terms of biological role, produces ATP from ADP in the presence of a proton gradient across the membrane. The alpha chain is a regulatory subunit. The chain is ATP synthase subunit alpha from Alkaliphilus oremlandii (strain OhILAs) (Clostridium oremlandii (strain OhILAs)).